The following is a 162-amino-acid chain: Flagellar assembly factor FliW (162 aa).

The protein belongs to the FliW family. In terms of assembly, interacts with translational regulator CsrA and flagellin(s).

It localises to the cytoplasm. Its function is as follows. Acts as an anti-CsrA protein, binds CsrA and prevents it from repressing translation of its target genes, one of which is flagellin. Binds to flagellin and participates in the assembly of the flagellum. This chain is Flagellar assembly factor FliW, found in Alkaliphilus metalliredigens (strain QYMF).